We begin with the raw amino-acid sequence, 658 residues long: Zinc finger protein 135 (658 aa).

Residues 14-85 (VTFEDVVVGF…ESRLPQGVYP (72 aa)) form the KRAB domain. The tract at residues 171-196 (LNPDLPHQPMTPERQSPHTWGTRGKR) is disordered. 16 consecutive C2H2-type zinc fingers follow at residues 214-236 (YKCQ…HRTH), 242-264 (YECH…QRIH), 270-292 (YKCT…QRTH), 298-320 (YECS…ERTH), 326-348 (YECS…LRIH), 354-376 (YQCG…QRIH), 382-404 (YECH…QRTH), 410-432 (YECG…RRIH), 438-460 (YGCN…ERTH), 466-488 (YECS…QRIH), 494-516 (YECN…QRIH), 522-544 (YECN…QRIH), 550-572 (YECN…QRIH), 578-600 (YGCN…ERTH), 606-628 (YECH…RRIH), and 634-656 (YACR…QRTH).

This sequence belongs to the krueppel C2H2-type zinc-finger protein family.

Its subcellular location is the nucleus. Its function is as follows. Plays a role in the regulation of cell morphology and cytoskeletal organization. May be involved in transcriptional regulation. In Homo sapiens (Human), this protein is Zinc finger protein 135 (ZNF135).